Consider the following 165-residue polypeptide: MTTFDLDDFLKSYKPKKVDLSSYTNHTKLKGYTYITKDDFNNLIPNRTYIKYILRSDVGTENNISKQIHCGGFFLSGGNFSGKKFVQSDDWITWTHLFLKYCPHPESNLNGEFTEHKFYLKTTKYYLFYRYYDKKSDIYNLKSIKLKKIKKLKKNSDSKSMKKTH.

This is an uncharacterized protein from Acanthamoeba polyphaga mimivirus (APMV).